Consider the following 72-residue polypeptide: UPF0154 protein Bcer98_2334 (72 aa).

Residues 3–23 (IWSGILVGVVALLAGVALGFF) form a helical membrane-spanning segment.

Belongs to the UPF0154 family.

Its subcellular location is the cell membrane. The protein is UPF0154 protein Bcer98_2334 of Bacillus cytotoxicus (strain DSM 22905 / CIP 110041 / 391-98 / NVH 391-98).